Here is a 387-residue protein sequence, read N- to C-terminus: Protein NDRG3 (387 aa).

The interval 329-387 is disordered; that stretch reads PSASMTRLVRSRTHSASSSGSMEMPRSRSHTSNAQLQSTSNNSLSNQIQETPHTIELSC. A compositionally biased stretch (low complexity) spans 359-377; the sequence is TSNAQLQSTSNNSLSNQIQ.

It belongs to the NDRG family.

This is Protein NDRG3 from Xenopus tropicalis (Western clawed frog).